Here is a 418-residue protein sequence, read N- to C-terminus: Triacylglycerol lipase 2 (418 aa).

The first 31 residues, 1-31, serve as a signal peptide directing secretion; sequence MAGSVMVPSVSIGLALSVLIFFALSLKTLEA. The N-linked (GlcNAc...) asparagine glycan is linked to Asn158. The active-site Nucleophile is Ser190. N-linked (GlcNAc...) asparagine glycans are attached at residues Asn286 and Asn342. Active-site charge relay system residues include Asp360 and His393.

Belongs to the AB hydrolase superfamily. Lipase family.

The protein localises to the secreted. It catalyses the reaction a triacylglycerol + H2O = a diacylglycerol + a fatty acid + H(+). Triacylglycerol (TAG) lipase. May be involved for TAG storage breakdown during seed germination. The polypeptide is Triacylglycerol lipase 2 (LIP2) (Arabidopsis thaliana (Mouse-ear cress)).